The sequence spans 370 residues: Glutamate 5-kinase (370 aa).

Lys13 contributes to the ATP binding site. Substrate-binding residues include Ser54, Asp140, and Asn152. Residues 172-173 (SD) and 214-220 (SGGMVTK) each bind ATP. Positions 278-355 (TGTLVLDAGA…GEIEAILGFR (78 aa)) constitute a PUA domain.

It belongs to the glutamate 5-kinase family.

It localises to the cytoplasm. The catalysed reaction is L-glutamate + ATP = L-glutamyl 5-phosphate + ADP. The protein operates within amino-acid biosynthesis; L-proline biosynthesis; L-glutamate 5-semialdehyde from L-glutamate: step 1/2. Its function is as follows. Catalyzes the transfer of a phosphate group to glutamate to form L-glutamate 5-phosphate. The sequence is that of Glutamate 5-kinase from Paramagnetospirillum magneticum (strain ATCC 700264 / AMB-1) (Magnetospirillum magneticum).